The chain runs to 122 residues: Ribosome-binding factor A (122 aa).

This sequence belongs to the RbfA family. As to quaternary structure, monomer. Binds 30S ribosomal subunits, but not 50S ribosomal subunits or 70S ribosomes.

It localises to the cytoplasm. Its function is as follows. One of several proteins that assist in the late maturation steps of the functional core of the 30S ribosomal subunit. Associates with free 30S ribosomal subunits (but not with 30S subunits that are part of 70S ribosomes or polysomes). Required for efficient processing of 16S rRNA. May interact with the 5'-terminal helix region of 16S rRNA. The polypeptide is Ribosome-binding factor A (Albidiferax ferrireducens (strain ATCC BAA-621 / DSM 15236 / T118) (Rhodoferax ferrireducens)).